The following is a 176-amino-acid chain: Nuclear transcription factor Y subunit B-10 (176 aa).

A compositionally biased stretch (gly residues) spans 1–15 (MAESQTGGGGGGSHE). Residues 1–29 (MAESQTGGGGGGSHESGGDQSPRSLNVRE) are disordered. Residue alanine 2 is modified to N-acetylalanine. The DNA-binding element occupies 34-40 (LPIANIS). The segment at 61–72 (MQECVSEFISFV) is subunit association domain (SAD). The tract at residues 121 to 176 (GDTKGSGKGGESSAKRDGQPSQVSQFSQVPQQGSFSQGPYGNSQGSNMMVQMPGTE) is disordered. Low complexity predominate over residues 139 to 159 (QPSQVSQFSQVPQQGSFSQGP). The segment covering 160–169 (YGNSQGSNMM) has biased composition (polar residues).

The protein belongs to the NFYB/HAP3 subunit family. As to quaternary structure, heterotrimeric transcription factor composed of three components, NF-YA, NF-YB and NF-YC. NF-YB and NF-YC must interact and dimerize for NF-YA association and DNA binding. In terms of tissue distribution, expressed in the whole plant, except roots.

It is found in the nucleus. In terms of biological role, component of the NF-Y/HAP transcription factor complex. The NF-Y complex stimulates the transcription of various genes by recognizing and binding to a CCAAT motif in promoters. This is Nuclear transcription factor Y subunit B-10 (NFYB10) from Arabidopsis thaliana (Mouse-ear cress).